The following is a 282-amino-acid chain: MEMO1 family protein Msm_1438 (282 aa).

It belongs to the MEMO1 family.

The protein is MEMO1 family protein Msm_1438 of Methanobrevibacter smithii (strain ATCC 35061 / DSM 861 / OCM 144 / PS).